Here is a 270-residue protein sequence, read N- to C-terminus: Formamidopyrimidine-DNA glycosylase (270 aa).

Pro2 acts as the Schiff-base intermediate with DNA in catalysis. Glu3 acts as the Proton donor in catalysis. Lys58 (proton donor; for beta-elimination activity) is an active-site residue. The DNA site is built by His90, Arg109, and Arg152. The FPG-type zinc finger occupies 237-270; it reads RVYGREGEPCHCGTVIRRRVDGGRSTFYCPKCQK. Residue Arg260 is the Proton donor; for delta-elimination activity of the active site.

This sequence belongs to the FPG family. As to quaternary structure, monomer. It depends on Zn(2+) as a cofactor.

It carries out the reaction Hydrolysis of DNA containing ring-opened 7-methylguanine residues, releasing 2,6-diamino-4-hydroxy-5-(N-methyl)formamidopyrimidine.. The catalysed reaction is 2'-deoxyribonucleotide-(2'-deoxyribose 5'-phosphate)-2'-deoxyribonucleotide-DNA = a 3'-end 2'-deoxyribonucleotide-(2,3-dehydro-2,3-deoxyribose 5'-phosphate)-DNA + a 5'-end 5'-phospho-2'-deoxyribonucleoside-DNA + H(+). Functionally, involved in base excision repair of DNA damaged by oxidation or by mutagenic agents. Acts as a DNA glycosylase that recognizes and removes damaged bases. Has a preference for oxidized purines, such as 7,8-dihydro-8-oxoguanine (8-oxoG). Has AP (apurinic/apyrimidinic) lyase activity and introduces nicks in the DNA strand. Cleaves the DNA backbone by beta-delta elimination to generate a single-strand break at the site of the removed base with both 3'- and 5'-phosphates. This chain is Formamidopyrimidine-DNA glycosylase, found in Rhizorhabdus wittichii (strain DSM 6014 / CCUG 31198 / JCM 15750 / NBRC 105917 / EY 4224 / RW1) (Sphingomonas wittichii).